Reading from the N-terminus, the 247-residue chain is Tyrosine recombinase XerD-like (247 aa).

A Core-binding (CB) domain is found at 1–72; sequence MIKHIEAFLA…TVNQFLHYLY (72 aa). One can recognise a Tyr recombinase domain in the interval 91–247; the sequence is STKVPFTYQL…PITLEKYYRL (157 aa). Arg212 is a catalytic residue. The active-site O-(3'-phospho-DNA)-tyrosine intermediate is the Tyr244.

This sequence belongs to the 'phage' integrase family. XerD-like subfamily.

The protein resides in the cytoplasm. In terms of biological role, putative tyrosine recombinase. Not involved in the cutting and rejoining of the recombining DNA molecules on dif(SL) site. The protein is Tyrosine recombinase XerD-like of Streptococcus uberis (strain ATCC BAA-854 / 0140J).